A 233-amino-acid chain; its full sequence is 7-cyano-7-deazaguanine synthase (233 aa).

7–17 (LSGGLDSAVTS) is an ATP binding site. Zn(2+)-binding residues include Cys-195, Cys-206, Cys-209, and Cys-212.

The protein belongs to the QueC family. It depends on Zn(2+) as a cofactor.

It carries out the reaction 7-carboxy-7-deazaguanine + NH4(+) + ATP = 7-cyano-7-deazaguanine + ADP + phosphate + H2O + H(+). The protein operates within purine metabolism; 7-cyano-7-deazaguanine biosynthesis. In terms of biological role, catalyzes the ATP-dependent conversion of 7-carboxy-7-deazaguanine (CDG) to 7-cyano-7-deazaguanine (preQ(0)). This is 7-cyano-7-deazaguanine synthase from Methanococcus maripaludis (strain C7 / ATCC BAA-1331).